Reading from the N-terminus, the 127-residue chain is Ribosome-binding factor A (127 aa).

It belongs to the RbfA family. In terms of assembly, monomer. Binds 30S ribosomal subunits, but not 50S ribosomal subunits or 70S ribosomes.

The protein localises to the cytoplasm. Functionally, one of several proteins that assist in the late maturation steps of the functional core of the 30S ribosomal subunit. Associates with free 30S ribosomal subunits (but not with 30S subunits that are part of 70S ribosomes or polysomes). Required for efficient processing of 16S rRNA. May interact with the 5'-terminal helix region of 16S rRNA. In Stenotrophomonas maltophilia (strain K279a), this protein is Ribosome-binding factor A.